The sequence spans 358 residues: MHAIGLMSGTSLDGVDAAVIETDGERVFGTGRSATLFYEDGLRARLRALLDAAPGLAPDDPELLSLDWLLADRHAEAVAMVASRADVVGFHGQTILHDPDRRRTWQIGDAAHLAHKTRLPVVHDFRSADVAAGGQGAPLAPLFHAALAEALEKPLLVVNIGGVANITWLGPTGEVLACDTGPGNGPLDDWVRLHTGAAFDADGALAAAGRVDQARLTRLMDDPWFARPAPKSLDRLQFSARVAAATEGLSAADGAALLVAFTAAAIAAAPLPAPPRRVLVAGGGRHNAAIMDALRRHFAAPVEPVEAVGWDGDALEAQCFGFLAVRALRGLPLSLPETTGVPAPLAGGRIVRPGPAAE.

An ATP-binding site is contributed by 9-16 (GTSLDGVD).

The protein belongs to the anhydro-N-acetylmuramic acid kinase family.

It carries out the reaction 1,6-anhydro-N-acetyl-beta-muramate + ATP + H2O = N-acetyl-D-muramate 6-phosphate + ADP + H(+). The protein operates within amino-sugar metabolism; 1,6-anhydro-N-acetylmuramate degradation. It functions in the pathway cell wall biogenesis; peptidoglycan recycling. Its function is as follows. Catalyzes the specific phosphorylation of 1,6-anhydro-N-acetylmuramic acid (anhMurNAc) with the simultaneous cleavage of the 1,6-anhydro ring, generating MurNAc-6-P. Is required for the utilization of anhMurNAc either imported from the medium or derived from its own cell wall murein, and thus plays a role in cell wall recycling. In Acidiphilium cryptum (strain JF-5), this protein is Anhydro-N-acetylmuramic acid kinase.